The primary structure comprises 333 residues: NADH-quinone oxidoreductase subunit H (333 aa).

Transmembrane regions (helical) follow at residues 15 to 35, 88 to 108, 117 to 137, 159 to 179, 191 to 211, 239 to 259, 272 to 294, and 313 to 333; these read FFIFFGLAVLLLFAVLGFVTY, FILAPVIAFAPAFMVLAVIPF, IGVGLLYYIAVSGITTIGVVT, ISYEIPLVMSVIGVVLLAGSL, VWYIFAQPIGFVIFLIAAVAE, WAFFMLSEYVYFFGMSSLITV, GFIPGAVWFALKFSSVVFLLIWF, and ILLPIALANIFLTALIKELFF.

It belongs to the complex I subunit 1 family. NDH-1 is composed of 14 different subunits. Subunits NuoA, H, J, K, L, M, N constitute the membrane sector of the complex.

The protein localises to the cell membrane. The enzyme catalyses a quinone + NADH + 5 H(+)(in) = a quinol + NAD(+) + 4 H(+)(out). NDH-1 shuttles electrons from NADH, via FMN and iron-sulfur (Fe-S) centers, to quinones in the respiratory chain. The immediate electron acceptor for the enzyme in this species is believed to be ubiquinone. Couples the redox reaction to proton translocation (for every two electrons transferred, four hydrogen ions are translocated across the cytoplasmic membrane), and thus conserves the redox energy in a proton gradient. This subunit may bind ubiquinone. The polypeptide is NADH-quinone oxidoreductase subunit H (Bacillus mycoides (strain KBAB4) (Bacillus weihenstephanensis)).